The chain runs to 274 residues: NH(3)-dependent NAD(+) synthetase (274 aa).

An ATP-binding site is contributed by 46 to 53 (GISGGQDS). Asp-52 is a Mg(2+) binding site. Arg-140 contacts deamido-NAD(+). Thr-160 provides a ligand contact to ATP. Glu-165 serves as a coordination point for Mg(2+). Residues Lys-173 and Asp-180 each coordinate deamido-NAD(+). ATP is bound by residues Lys-189 and Thr-211. 260–261 (HK) is a deamido-NAD(+) binding site.

This sequence belongs to the NAD synthetase family. In terms of assembly, homodimer.

The enzyme catalyses deamido-NAD(+) + NH4(+) + ATP = AMP + diphosphate + NAD(+) + H(+). The protein operates within cofactor biosynthesis; NAD(+) biosynthesis; NAD(+) from deamido-NAD(+) (ammonia route): step 1/1. Catalyzes the ATP-dependent amidation of deamido-NAD to form NAD. Uses ammonia as a nitrogen source. This is NH(3)-dependent NAD(+) synthetase from Streptococcus equi subsp. zooepidemicus (strain H70).